A 226-amino-acid polypeptide reads, in one-letter code: MEQLFQKYEKKLKLQNVQARIWEEKHTYIKSGKAVFKVPNPPKQERTFRWVIEAPASSCQTSRGYSVKFTPSRVKRAKIPERMYNMKRCFQLRRDSRIALSDAIFQPEKKTNTMDHLFTASTAPEYSEKELRQIEDFQSFFDNWDDDYYTEQDCLDLMQQAVNGRIEVYQEVYKQTSNPIYLAKAVFIKFLDFDRLSPLHKTYLMLSEECEFPMCYVEGILRRHYE.

This is an uncharacterized protein from Caenorhabditis elegans.